Consider the following 623-residue polypeptide: Chaperone protein HtpG (623 aa).

The a; substrate-binding stretch occupies residues 1–341; sequence MEKREFKAES…SQDLSLNISR (341 aa). Residues 342 to 549 are b; sequence EMLQHDRQLS…EGEVSIEMEK (208 aa). The tract at residues 550 to 623 is c; the sequence is ILSAMPNNQG…FTNDICKLMK (74 aa).

This sequence belongs to the heat shock protein 90 family. Homodimer.

Its subcellular location is the cytoplasm. In terms of biological role, molecular chaperone. Has ATPase activity. This Clostridium perfringens (strain ATCC 13124 / DSM 756 / JCM 1290 / NCIMB 6125 / NCTC 8237 / Type A) protein is Chaperone protein HtpG.